Consider the following 87-residue polypeptide: U9-ctenitoxin-Pn1a (87 aa).

An N-terminal signal peptide occupies residues 1-22; it reads MWLKTQLFVLAIAVIALLEVHA. The propeptide occupies 23 to 37; sequence EPESNDNNELVVEEA. 4 disulfides stabilise this stretch: C40-C54, C47-C64, C53-C73, and C66-C71. A propeptide spanning residues 75-87 is cleaved from the precursor; sequence KSLREMAAAAFGR.

The protein belongs to the neurotoxin 02 (plectoxin) family. 01 (Tx3) subfamily. In terms of tissue distribution, expressed by the venom gland.

It is found in the secreted. Its function is as follows. Antagonist of L-type calcium channels (Cav1/CACNA1). This chain is U9-ctenitoxin-Pn1a, found in Phoneutria nigriventer (Brazilian armed spider).